The following is a 271-amino-acid chain: ATP synthase subunit a (271 aa).

The next 5 membrane-spanning stretches (helical) occupy residues 40-60 (TINIDSMFFSVVLGLLFLVLF), 100-120 (LIAPLALTIFVWVFLMNLMDL), 146-166 (DVNVTLSMALGVFILILFYSI), 220-240 (LIFILIAGLLPWWSQWILNVP), and 242-262 (AIFHILIITLQAFIFMVLTIV).

The protein belongs to the ATPase A chain family. F-type ATPases have 2 components, CF(1) - the catalytic core - and CF(0) - the membrane proton channel. CF(1) has five subunits: alpha(3), beta(3), gamma(1), delta(1), epsilon(1). CF(0) has three main subunits: a(1), b(2) and c(9-12). The alpha and beta chains form an alternating ring which encloses part of the gamma chain. CF(1) is attached to CF(0) by a central stalk formed by the gamma and epsilon chains, while a peripheral stalk is formed by the delta and b chains.

The protein localises to the cell inner membrane. Key component of the proton channel; it plays a direct role in the translocation of protons across the membrane. This Escherichia coli O1:K1 / APEC protein is ATP synthase subunit a.